We begin with the raw amino-acid sequence, 196 residues long: Nitrogen regulatory protein P-II homolog (196 aa).

The transit peptide at 1–61 directs the protein to the chloroplast; the sequence is MAASMTKPIS…NNSRVLPVVS (61 aa). Residues 108-112 and 161-164 each bind ATP; these read GFGAQ and GDGK. G110 is a Mg(2+) binding site.

Belongs to the P(II) protein family. Homodimer. Interacts with NAGK. Interaction with NAGK is dependent of MgATP and inhibited by 2-oxoglutarate, arginine, glutamate, citrate, and oxaloacetate.

Its subcellular location is the plastid. The protein localises to the chloroplast. Participates in sensing carbon and organic nitrogen status and regulates some steps of primary carbon and nitrogen metabolism. Required for nitrite uptake in chloroplasts and regulates arginine biosynthesis through interaction with acetylglutamate kinase (NAGK) in chloroplasts. Regulates fatty acids synthesis in chloroplasts by interacting with the acetyl-CoA carboxylase complex and inhibiting acetyl-CoA carboxylase (ACCase) activity. The polypeptide is Nitrogen regulatory protein P-II homolog (GLB1) (Arabidopsis thaliana (Mouse-ear cress)).